We begin with the raw amino-acid sequence, 648 residues long: p-hydroxybenzoic acid efflux pump subunit AaeB (648 aa).

The next 11 helical transmembrane spans lie at 11 to 31 (FACKLTLASVLSLLLGFYFGL), 41 to 61 (AALVAAAPAFAAGGEPFSGAI), 65 to 87 (GWLRIIGTVLGSLCALLLMMLLI), 91 to 110 (LLMILLCCLWAGVCTWLSSL), 125 to 145 (TALIIVVSCLGEPQFILQLAL), 150 to 170 (EIVLGIVCAVLVDTLLAPRSV), 369 to 389 (LFWLWSGWSAGSGCMIMIAVV), 406 to 426 (FLMGSLVALPVGALYYTLILP), 430 to 450 (QSLVLLCLSLGALTFICGMAV), 458 to 478 (MGTLASTLNILALSNPMGFPI), and 481 to 501 (FVDSAIGQMVGCLLALVVLLV).

It belongs to the aromatic acid exporter ArAE (TC 2.A.85) family.

Its subcellular location is the cell inner membrane. In terms of biological role, forms an efflux pump with AaeA. Could function as a metabolic relief valve, allowing to eliminate certain compounds when they accumulate to high levels in the cell. In Edwardsiella ictaluri (strain 93-146), this protein is p-hydroxybenzoic acid efflux pump subunit AaeB.